The primary structure comprises 75 residues: Exodeoxyribonuclease 7 small subunit (75 aa).

Belongs to the XseB family. In terms of assembly, heterooligomer composed of large and small subunits.

The protein localises to the cytoplasm. The catalysed reaction is Exonucleolytic cleavage in either 5'- to 3'- or 3'- to 5'-direction to yield nucleoside 5'-phosphates.. Functionally, bidirectionally degrades single-stranded DNA into large acid-insoluble oligonucleotides, which are then degraded further into small acid-soluble oligonucleotides. The polypeptide is Exodeoxyribonuclease 7 small subunit (Geobacter sp. (strain M21)).